Consider the following 259-residue polypeptide: GTP cyclohydrolase FolE2 (259 aa).

This sequence belongs to the GTP cyclohydrolase IV family.

The catalysed reaction is GTP + H2O = 7,8-dihydroneopterin 3'-triphosphate + formate + H(+). It participates in cofactor biosynthesis; 7,8-dihydroneopterin triphosphate biosynthesis; 7,8-dihydroneopterin triphosphate from GTP: step 1/1. Converts GTP to 7,8-dihydroneopterin triphosphate. The protein is GTP cyclohydrolase FolE2 of Thermotoga neapolitana (strain ATCC 49049 / DSM 4359 / NBRC 107923 / NS-E).